Reading from the N-terminus, the 2639-residue chain is MDGRDFAPPPHLLSERGSLGHRSAAAAARLAPAGPAAQPPAHFQPGKYFPSPLPMASHTASSRLMGSSPASSFMGSFLTSSLGSAASTHPSGPSSSPPEQAYRGSHPTTSQIWFSHSHEAPGYPRFSGSLASTFLPVSHLDHHGNSNVLYGQHRFYGTQKDNFYLRNLPPQPTLLPANHNFPSVARAAPAHPMGSCSRDRDRGEAGSLQKGPKDFDRFLVGKELGREKAGKAAEGKERPAAEEDGGKERHKLVLPVPADGHCREGGPAPRGACEGRPKHLTSCLLNTKVLNGEMGRAALASCAGGMLGRPGTGVVTSGRCAKEAAGPPEPGPAFSECLERRQMLHHTASYAGPPPPLSTAAGSFPCLQLHGGPDGLCPLQDKAPRDLKASGPTFVPSVGHLADKGRPFQAAEACAVAGEGKDRHLEGTMAPDHAAPYGVSYAHLKAEGKGERRPGGFEAALNPRLKGLDYLSSAGPEASFPGLPKSGLDKSGYFELPTSSQDCARPGHQDPLGGKAPQACCTLDKTVGKEAPAGPPGAQKVARIRHQQHLMAAEVEQGGIGAEAKRKSLELASLGYSGPHLPPWGVQAGQGTAMAISEERKAGAYLDPFGSGLQQAALLPQELPAPPDEVSAMKNLLKYSSQALVVGQKAPLVGLGGLKASCIQQEAKFLSSKGPGQSERPDCARSREHDTTHGDGEVRQPPVGIAVALARQKDTVSRSEAAYGTNTARQGRAAPAFKGGGGPRSTHALDLEAEEERTRLCDDRLGLASRELLLQDSKDRVEFARIHPPSSCPGDLAPHLMMQSGQLGGDPAPHTHPHPPWLPRTRSPSLWMGGHSYGLGHPALHQNLPPGFPASVAGPVPSVFPLPQDAPTQLVILPSEPTPHSAPHALADVMDQASLWPPMYGGRGPASHMQHPGQLPVYSRPQLLRQQELYALQQQRAAQFQRKPEDQHLDLEEPAQEKAPKSTHKPVALTPTAPGAPSPAAGPTKLPPCCHPPDPKPPASSPTPPPRPSAPCTLNVCPASSPGPGSRVRSAEEKNGEGQQSTADIITSEPVARAHSVAHAGLEFLASNDPSTSASQSFGITDLPPGYLRPMAGLGFSLPSDVHSSNLEDPETMQTTAPGAQPEPTRTFLPGEPPPCSPRSLEEPGLLSGAREATQDLAATPYPTERGPQGKAADPSPLEGLQELQCAALLEAGGPEATGQAHSTQGGAREERSREEGEQGPSSGASSQVLEQRAGSPGALEDEGEQPAPEEDELEEDELGQQSMEDSEEDCGGAPDNSHPPRALPGLDALVAATINLGDLPSDSPPDPQPPAASGPPSTVPLPHSSGIHGIALLSELADLAIQRQRSERTVPEEEEDVLAFNLQHLATLATAWSLVEAAGLDSSTAPAQPPTANPCSGPRLTPRMQILQRKDTWTPKTKPVCPLKAAIDRLDTQEVGMRVRLAELQRRYKEKQRELARLQRKHDHERDESSRSPARRGPGRPRKRKHSSSLPAPRPTGPLPRSDGKKVKAVRTSLGLLCAELRGGSGGEPAKKRSKLERSVYAGLQTASVEKAQCKKSSCQGGLAPSVAHRVAQLKPKVKSKGLPTGLSSFQQKEATPGGRIREKLSRAKSAKVSGATRHPQPKGHGSRETPRCPAQPSVAASQEAGSGYDSEDCEGLLGTEAPPREAGLLLHTGASVAVLGPSPSSVVKMEANQKAKKKKERQGLLGACRLSSPESEVKIKRRSVKAKVGTTLERAPGQRPPGALGKKKAKGKAKGSLRAEPGATPSRDALFNPSRAFACREEGSQLASERLKRATRKGTVLQPVLRRKNGALSITLATRNAKAILGKGRKLSKVKHKAGKQGKGRAVSRLLESFAVEEDFEFDDNSSFSEEEEDEEEEEEDSGPLSAEQSAALARSCAIHKEDLRDGLPVLIPKEDSLLYAGSVRTLQPPDIYSIVIEGERGNRQRIYSLEQLLQEAVLDVRPQSSRYLPPGTRVCAYWSQKSRCLYPGNVVRGASGDEDEDLDSVVVEFDDGDTGHIAVSNVRLLPPDFKIQCTEPSPALLVSSSCRRTKKVSSEAPPPSEAATPSLSPKAQDGPEALKTPGKKSISKDKAGKAELLTSGAKSPTGASDHFLGRRGSPLLSWSAVAQTKRKAVAAASKGPGVLQNLFQLNGSSKKLRAREALFPVHSVATPIFGNGFRADSFSSLASSYAPFVGGTGPGLPRGAHKLLRAKKAERVEAEKGGRRRAGGEFLVKLDHEGVTSPKNKTCKALLMGDKDFSPKLGRPLPSPSYVHPALVGKDKKGRAPIPPLPMGLALRKYAGQAEFPLPYDSDCHSSFSDEDEDGPGLAAGVPSRFLARLSVSSSSSGSSTSSSSGSVSTSSLCSSDNEDSSYSSDDEDPALLLQTCLTHPVPTLLAQPEALRSKGSGPHAHAQRCFLSRATVAGTGAGSGPSSSSKSKLKRKEALSFSKAKELSRRQRPPSVENRPKISAFLPARQLWKWSGNPTQRRGMKGKARKLFYKAIVRGEETLRVGDCAVFLSAGRPNLPYIGRIESMWESWGSNMVVKVKWFYHPEETKLGKRQCDGKNALYQSCHEDENDVQTISHKCQVVAREQYEQMARSRKCQDRQDLYYLAGTYDPTTGRLVTADGVPILC.

Disordered regions lie at residues 23 to 49 (SAAAAARLAPAGPAAQPPAHFQPGKYF), 84 to 107 (SAASTHPSGPSSSPPEQAYRGSHP), 188 to 249 (APAH…GKER), 669 to 702 (FLSSKGPGQSERPDCARSREHDTTHGDGEVRQPP), 716 to 746 (VSRSEAAYGTNTARQGRAAPAFKGGGGPRST), 939 to 1047 (QRAA…QSTA), 1104 to 1331 (SDVH…HSSG), 1457 to 1513 (QREL…KKVK), 1582 to 1666 (KVKS…LGTE), 1722 to 1776 (EVKI…RDAL), 1868 to 1893 (FDDNSSFSEEEEDEEEEEEDSGPLSA), and 2057 to 2119 (KKVS…DHFL). 2 stretches are compositionally biased toward low complexity: residues 24–41 (AAAAARLAPAGPAAQPPA) and 84–98 (SAASTHPSGPSSSPP). 2 stretches are compositionally biased toward basic and acidic residues: residues 211 to 247 (GPKDFDRFLVGKELGREKAGKAAEGKERPAAEEDGGK) and 679 to 698 (ERPDCARSREHDTTHGDGEV). Lys222 carries the post-translational modification N6-acetyllysine. Positions 946 to 964 (RKPEDQHLDLEEPAQEKAP) are enriched in basic and acidic residues. The span at 972-988 (ALTPTAPGAPSPAAGPT) shows a compositional bias: low complexity. The span at 989–1013 (KLPPCCHPPDPKPPASSPTPPPRPS) shows a compositional bias: pro residues. The segment covering 1106 to 1122 (VHSSNLEDPETMQTTAP) has biased composition (polar residues). Low complexity predominate over residues 1182-1198 (LEGLQELQCAALLEAGG). Positions 1212–1221 (AREERSREEG) are enriched in basic and acidic residues. The span at 1244–1275 (LEDEGEQPAPEEDELEEDELGQQSMEDSEEDC) shows a compositional bias: acidic residues. A compositionally biased stretch (pro residues) spans 1307–1324 (DSPPDPQPPAASGPPSTV). Residues 1439–1473 (EVGMRVRLAELQRRYKEKQRELARLQRKHDHERDE) are a coiled coil. Residues 1457–1475 (QRELARLQRKHDHERDESS) are compositionally biased toward basic and acidic residues. Residues 1478–1492 (PARRGPGRPRKRKHS) show a composition bias toward basic residues. Residues 1751–1761 (GKKKAKGKAKG) are compositionally biased toward basic residues. The segment covering 1868–1888 (FDDNSSFSEEEEDEEEEEEDS) has biased composition (acidic residues). Ser2274 is modified (phosphoserine). Disordered regions lie at residues 2317-2336 (SDCHSSFSDEDEDGPGLAAG), 2348-2383 (SSSSSGSSTSSSSGSVSTSSLCSSDNEDSSYSSDDE), and 2432-2472 (GAGS…ENRP). Residues 2348-2371 (SSSSSGSSTSSSSGSVSTSSLCSS) show a composition bias toward low complexity. The segment covering 2372-2383 (DNEDSSYSSDDE) has biased composition (acidic residues). Residues 2432-2442 (GAGSGPSSSSK) are compositionally biased toward low complexity. A BAH domain is found at 2513 to 2633 (ETLRVGDCAV…PTTGRLVTAD (121 aa)).

The chain is BAH and coiled-coil domain-containing protein 1 from Homo sapiens (Human).